We begin with the raw amino-acid sequence, 86 residues long: RNA-binding protein Hfq (86 aa).

One can recognise a Sm domain in the interval 10–71 (DLFLNNARKE…VSTIQPGKYI (62 aa)).

This sequence belongs to the Hfq family. As to quaternary structure, homohexamer.

Functionally, RNA chaperone that binds small regulatory RNA (sRNAs) and mRNAs to facilitate mRNA translational regulation in response to envelope stress, environmental stress and changes in metabolite concentrations. Also binds with high specificity to tRNAs. This chain is RNA-binding protein Hfq, found in Clostridioides difficile (strain 630) (Peptoclostridium difficile).